Reading from the N-terminus, the 175-residue chain is ATP synthase subunit delta (175 aa).

Belongs to the ATPase delta chain family. In terms of assembly, F-type ATPases have 2 components, F(1) - the catalytic core - and F(0) - the membrane proton channel. F(1) has five subunits: alpha(3), beta(3), gamma(1), delta(1), epsilon(1). F(0) has three main subunits: a(1), b(2) and c(10-14). The alpha and beta chains form an alternating ring which encloses part of the gamma chain. F(1) is attached to F(0) by a central stalk formed by the gamma and epsilon chains, while a peripheral stalk is formed by the delta and b chains.

The protein resides in the cell inner membrane. Its function is as follows. F(1)F(0) ATP synthase produces ATP from ADP in the presence of a proton or sodium gradient. F-type ATPases consist of two structural domains, F(1) containing the extramembraneous catalytic core and F(0) containing the membrane proton channel, linked together by a central stalk and a peripheral stalk. During catalysis, ATP synthesis in the catalytic domain of F(1) is coupled via a rotary mechanism of the central stalk subunits to proton translocation. This protein is part of the stalk that links CF(0) to CF(1). It either transmits conformational changes from CF(0) to CF(1) or is implicated in proton conduction. The polypeptide is ATP synthase subunit delta (Xylella fastidiosa (strain M12)).